The primary structure comprises 272 residues: Neurogenin-2 (272 aa).

Positions 30–69 are disordered; sequence LTPLSSSADEEEEEEPGASGGARRQRGAEAGQGARGGVAA. The 53-residue stretch at 112-164 folds into the bHLH domain; that stretch reads TRRLKANNRERNRMHNLNAALDALREVLPTFPEDAKLTKIETLRFAHNYIWAL. Residues 197-239 are compositionally biased toward low complexity; it reads ASAALSSSGDSPSPASTWSCTNSPAPSSSVSSNSTSPYSCTLS. The interval 197-264 is disordered; it reads ASAALSSSGD…PPDKHRYAPH (68 aa).

In terms of assembly, efficient DNA binding requires dimerization with another bHLH protein.

The protein localises to the nucleus. Its function is as follows. Transcriptional regulator. Involved in neuronal differentiation. Activates transcription by binding to the E box (5'-CANNTG-3'). The protein is Neurogenin-2 (NEUROG2) of Homo sapiens (Human).